The sequence spans 428 residues: CinA-like protein (428 aa).

The protein belongs to the CinA family.

This Chlorobium phaeovibrioides (strain DSM 265 / 1930) (Prosthecochloris vibrioformis (strain DSM 265)) protein is CinA-like protein.